Consider the following 144-residue polypeptide: Lysozyme C II (144 aa).

An N-terminal signal peptide occupies residues 1 to 15 (MRAVVVLLLVAVASA). Residues 16 to 144 (KVYDRCELAR…LRSYVAGCGV (129 aa)) enclose the C-type lysozyme domain. Disulfide bonds link Cys-21-Cys-142, Cys-45-Cys-130, Cys-79-Cys-95, and Cys-91-Cys-109. Active-site residues include Glu-50 and Asp-67.

The protein resides in the secreted. It catalyses the reaction Hydrolysis of (1-&gt;4)-beta-linkages between N-acetylmuramic acid and N-acetyl-D-glucosamine residues in a peptidoglycan and between N-acetyl-D-glucosamine residues in chitodextrins.. In terms of biological role, lysozymes have primarily a bacteriolytic function; those in tissues and body fluids are associated with the monocyte-macrophage system and enhance the activity of immunoagents. Has antibacterial activity against the Gram positive bacterium P.citreus. Has no antibacterial activity against the Gram negative bacteria E.coli and Y.ruckeri. Does not have hemolytic activity against trout erythrocytes. This is Lysozyme C II from Oncorhynchus mykiss (Rainbow trout).